Reading from the N-terminus, the 267-residue chain is Glutamate 5-kinase (267 aa).

Residue Lys15 participates in ATP binding. Substrate is bound by residues Ser55, Asp142, and Asn158. Residues 178–179 (SD) and 220–226 (TGGMATK) each bind ATP.

This sequence belongs to the glutamate 5-kinase family.

It localises to the cytoplasm. It catalyses the reaction L-glutamate + ATP = L-glutamyl 5-phosphate + ADP. It functions in the pathway amino-acid biosynthesis; L-proline biosynthesis; L-glutamate 5-semialdehyde from L-glutamate: step 1/2. Its function is as follows. Catalyzes the transfer of a phosphate group to glutamate to form L-glutamate 5-phosphate. This chain is Glutamate 5-kinase, found in Ligilactobacillus salivarius (strain UCC118) (Lactobacillus salivarius).